The primary structure comprises 375 residues: DNA replication and repair protein RecF (375 aa).

ATP is bound at residue 30–37; sequence GENAQGKT.

Belongs to the RecF family.

The protein resides in the cytoplasm. In terms of biological role, the RecF protein is involved in DNA metabolism; it is required for DNA replication and normal SOS inducibility. RecF binds preferentially to single-stranded, linear DNA. It also seems to bind ATP. The chain is DNA replication and repair protein RecF from Bacillus thuringiensis (strain Al Hakam).